The primary structure comprises 207 residues: Outer-membrane lipoprotein LolB (207 aa).

A signal peptide spans 1-21; that stretch reads MPQPDFRLIRLLPLAALVLTA. The N-palmitoyl cysteine moiety is linked to residue C22. Residue C22 is the site of S-diacylglycerol cysteine attachment.

Belongs to the LolB family. Monomer.

It localises to the cell outer membrane. Functionally, plays a critical role in the incorporation of lipoproteins in the outer membrane after they are released by the LolA protein. The polypeptide is Outer-membrane lipoprotein LolB (Shigella sonnei (strain Ss046)).